The sequence spans 598 residues: Arginine--tRNA ligase (598 aa).

The 'HIGH' region motif lies at 131 to 141 (ANPTGPMHVGH). Residues 288–308 (KLPPPKSKKGQPPAQPQPDEE) are disordered.

The protein belongs to the class-I aminoacyl-tRNA synthetase family. Monomer.

It localises to the cytoplasm. The enzyme catalyses tRNA(Arg) + L-arginine + ATP = L-arginyl-tRNA(Arg) + AMP + diphosphate. This is Arginine--tRNA ligase from Anaeromyxobacter sp. (strain K).